Here is a 74-residue protein sequence, read N- to C-terminus: Sec-independent protein translocase protein TatA (74 aa).

Residues 1–21 (MGSIGMTELLLIFGIIVLLFG) form a helical membrane-spanning segment.

Belongs to the TatA/E family. Forms a complex with TatC.

The protein localises to the cell inner membrane. Its function is as follows. Part of the twin-arginine translocation (Tat) system that transports large folded proteins containing a characteristic twin-arginine motif in their signal peptide across membranes. TatA could form the protein-conducting channel of the Tat system. This Sulfurihydrogenibium sp. (strain YO3AOP1) protein is Sec-independent protein translocase protein TatA.